The primary structure comprises 88 residues: Large ribosomal subunit protein bL27 (88 aa).

The disordered stretch occupies residues 1–21 (MAHKKGASSSRNGRDSNAQRL). The segment covering 7–19 (ASSSRNGRDSNAQ) has biased composition (polar residues).

It belongs to the bacterial ribosomal protein bL27 family.

This is Large ribosomal subunit protein bL27 from Frankia casuarinae (strain DSM 45818 / CECT 9043 / HFP020203 / CcI3).